The sequence spans 231 residues: ATP phosphoribosyltransferase (231 aa).

Belongs to the ATP phosphoribosyltransferase family. Short subfamily. As to quaternary structure, heteromultimer composed of HisG and HisZ subunits.

It localises to the cytoplasm. It carries out the reaction 1-(5-phospho-beta-D-ribosyl)-ATP + diphosphate = 5-phospho-alpha-D-ribose 1-diphosphate + ATP. The protein operates within amino-acid biosynthesis; L-histidine biosynthesis; L-histidine from 5-phospho-alpha-D-ribose 1-diphosphate: step 1/9. Its function is as follows. Catalyzes the condensation of ATP and 5-phosphoribose 1-diphosphate to form N'-(5'-phosphoribosyl)-ATP (PR-ATP). Has a crucial role in the pathway because the rate of histidine biosynthesis seems to be controlled primarily by regulation of HisG enzymatic activity. The sequence is that of ATP phosphoribosyltransferase from Brucella suis (strain ATCC 23445 / NCTC 10510).